The chain runs to 91 residues: Small ribosomal subunit protein uS19 (91 aa).

Belongs to the universal ribosomal protein uS19 family.

Functionally, protein S19 forms a complex with S13 that binds strongly to the 16S ribosomal RNA. This chain is Small ribosomal subunit protein uS19, found in Prochlorococcus marinus (strain MIT 9515).